A 1264-amino-acid polypeptide reads, in one-letter code: P-type sodium-transporting ATPase4 (1264 aa).

Positions M1–Q12 are enriched in polar residues. The disordered stretch occupies residues M1–N102. Basic and acidic residues-rich tracts occupy residues N15–N42 and N50–E64. A run of 8 helical transmembrane segments spans residues V165–A185, V186–L206, G359–I379, F393–M413, F923–V943, I1006–F1026, C1203–L1223, and T1226–L1246.

It belongs to the cation transport ATPase (P-type) (TC 3.A.3) family.

It localises to the cell membrane. The catalysed reaction is Na(+)(in) + ATP + H2O = Na(+)(out) + ADP + phosphate + H(+). Its activity is regulated as follows. Inhibited by cipargamin and other spiroindolone compounds. Inhibited by 4-cyano-3-methylisoquinoline derivatives MB14 and MB10 but not RK18. Inhibited by (+)-SJ733, a dihydroisoquinolone compound. In terms of biological role, sodium-exporting ATPase. Required for the extrusion of Na(+) from the intraerythrocytic parasites to maintain a low cytosolic concentration of Na(+). The polypeptide is P-type sodium-transporting ATPase4 (Plasmodium falciparum (isolate 3D7)).